The sequence spans 301 residues: G-protein coupled receptor homolog U51 (301 aa).

The Extracellular portion of the chain corresponds to 1 to 15 (MEKETKSLAWPATAE). A helical membrane pass occupies residues 16–36 (FYGWVFIFSSIQLCTVVFLTV). Topologically, residues 37–48 (RFNGFKVGREYA) are cytoplasmic. The chain crosses the membrane as a helical span at residues 49-69 (VFTFAGMSFNCFLLPIKMGLL). The Extracellular portion of the chain corresponds to 70-82 (SGHWTLPRDFCAI). The helical transmembrane segment at 83–103 (LLYIDDFSAYFSSWSLVFMAI) threads the bilayer. The Cytoplasmic portion of the chain corresponds to 104 to 122 (ERINYFCYSTPLLNENSKA). Residues 123–143 (LAKVCFPIVWVVSGVQALQML) traverse the membrane as a helical segment. The Extracellular portion of the chain corresponds to 144-168 (NNYKATALQNETGQCFLAFLRSGHD). Asn-153 is a glycosylation site (N-linked (GlcNAc...) asparagine; by host). Residues 169–189 (MWLMLVYSVVIPVMLVFFYLY) traverse the membrane as a helical segment. At 190-199 (SKNFMLLKDE) the chain is on the cytoplasmic side. Residues 200–220 (LSSVTTYLCIYLLLGTIAHLP) form a helical membrane-spanning segment. The Extracellular segment spans residues 221–238 (KAALSEIESDKIFYGLRD). A helical transmembrane segment spans residues 239 to 259 (IFMALPVLKVYYISAMAYCMA). At 260–301 (CDDHTVPVRLCSIWLVNLCKKCFSCTRREKGSDLEVGIKMLK) the chain is on the cytoplasmic side.

This sequence belongs to the G-protein coupled receptor 1 family.

It is found in the host cell membrane. In Homo sapiens (Human), this protein is G-protein coupled receptor homolog U51 (U51).